The following is a 218-amino-acid chain: GTP cyclohydrolase 1 (218 aa).

Cys109, His112, and Cys180 together coordinate Zn(2+).

This sequence belongs to the GTP cyclohydrolase I family. Toroid-shaped homodecamer, composed of two pentamers of five dimers.

It carries out the reaction GTP + H2O = 7,8-dihydroneopterin 3'-triphosphate + formate + H(+). Its pathway is cofactor biosynthesis; 7,8-dihydroneopterin triphosphate biosynthesis; 7,8-dihydroneopterin triphosphate from GTP: step 1/1. This Haemophilus influenzae (strain 86-028NP) protein is GTP cyclohydrolase 1.